Reading from the N-terminus, the 1089-residue chain is MDDGRKKELHDLNTRAWNGEEVFPLKSKKLDSSIKRNTGFIKKLKKGFVKGSESSLLKDLSEASLEKYLSEIIVTVTECLLNVLNKNDDVIAAVEIISGLHQRFNGRFTSPLLGAFLQAFENPSVDIESERDELQRITRVKGNLRVFTELYLVGVFRTLDDIESKDAIPNFLQKKTGRKDPLLFSILREILNYKFKLGFTTTIATAFIKKFAPLFRDDDNSWDDLIYDSKLKGALQSLFKNFIDATFARATELHKKVNKLQREHQKCQIRTGKLRDEYVEEYDKLLPIFIRFKTSAITLGEFFKLEIPELEGASNDDLKETASPMITNQILPPNQRLWENEDTRKFYEILPDISKTVEESQSSKTEKDSNVNSKNINLFFTDLEMADCKDIIDDLSNRYWSSYLDNKATRNRILKFFMETQDWSKLPVYSRFIATNSKYMPEIVSEFINYLDNGFRSQLHSNKINVKNIIFFSEMIKFQLIPSFMIFHKIRTLIMYMQVPNNVEILTVLLEHSGKFLLNKPEYKELMEKMVQLIKDKKNDRQLNMNMKSALENIITLLYPPSVKSLNVTVKTITPEQQFYRILIRSELSSLDFKHIVKLVRKAHWDDVAIQKVLFSLFSKPHKISYQNIPLLTKVLGGLYSYRRDFVIRCIDQVLENIERGLEINDYGQNMHRISNVRYLTEIFNFEMIKSDVLLDTIYHIIRFGHINNQPNPFYLNYSDPPDNYFRIQLVTTILLNINRTPAAFTKKCKLLLRFFEYYTFIKEQPLPKETEFRVSSTFKKYENIFGNTKFERSENLVESASRLESLLKSLNAIKSKDDRVKGSSASIHNGKESAVPIESITEDDEDEDDENDDGVDLLGEDEDAEISTPNTESAPGKHQAKQDESEDEDDEDDDEDDDDDDDDDDDDGEEGDEDDDEDDDDEDDDDEEEEDSDSDLEYGGDLDADRDIEMKRMYEEYERKLKDEEERKAEEELERQFQKMMQESIDARKSEKVVASKIPVISKPVSVQKPLLLKKSEEPSSSKETYEELSKPKKIAFTFLTKSGKKTQSRILQLPTDVKFVSDVLEEEEKLKTERNKIKKIVLKRSFD.

The disordered stretch occupies residues 819–951; it reads DRVKGSSASI…DLDADRDIEM (133 aa). Acidic residues-rich tracts occupy residues 841-866 and 885-943; these read ITED…EDAE and ESED…GGDL.

It localises to the cytoplasm. Its function is as follows. Involved in nonsense-mediated decay of mRNAs containing premature stop codons. It interacts, via its C-terminus, with NAM7/UPF1. Could be involved in determining the efficiency of translational termination or reinitiation or factors involved in the initial assembly of an initiation- and termination-competent mRNP. This Saccharomyces cerevisiae (strain ATCC 204508 / S288c) (Baker's yeast) protein is Nonsense-mediated mRNA decay protein 2 (NMD2).